Consider the following 68-residue polypeptide: Protein SrnB (68 aa).

A helical transmembrane segment spans residues 23–42 (YALIGLLAVCATVLCFSLIF).

Belongs to the Hok/Gef family.

The protein localises to the cell inner membrane. In terms of biological role, toxic component of a type I toxin-antitoxin (TA) system. Its normal function is believed to be effective plasmid stabilization through postsegregational killing of cells that have lost the F plasmid. Promotes degradation of stable RNA in E.coli. This chain is Protein SrnB (srnB), found in Escherichia coli (strain K12).